The chain runs to 488 residues: Acetyl-coenzyme A carboxylase carboxyl transferase subunit beta, chloroplastic (488 aa).

One can recognise a CoA carboxyltransferase N-terminal domain in the interval 221–488 (LWIQCDNCYA…FFPLNKNEIK (268 aa)). Cys225, Cys228, Cys244, and Cys247 together coordinate Zn(2+). The C4-type zinc finger occupies 225–247 (CDNCYALIYKKALKLKLNVCEQC).

The protein belongs to the AccD/PCCB family. In terms of assembly, acetyl-CoA carboxylase is a heterohexamer composed of biotin carboxyl carrier protein, biotin carboxylase and 2 subunits each of ACCase subunit alpha and ACCase plastid-coded subunit beta (accD). It depends on Zn(2+) as a cofactor.

Its subcellular location is the plastid. It localises to the chloroplast stroma. It catalyses the reaction N(6)-carboxybiotinyl-L-lysyl-[protein] + acetyl-CoA = N(6)-biotinyl-L-lysyl-[protein] + malonyl-CoA. It functions in the pathway lipid metabolism; malonyl-CoA biosynthesis; malonyl-CoA from acetyl-CoA: step 1/1. Its function is as follows. Component of the acetyl coenzyme A carboxylase (ACC) complex. Biotin carboxylase (BC) catalyzes the carboxylation of biotin on its carrier protein (BCCP) and then the CO(2) group is transferred by the transcarboxylase to acetyl-CoA to form malonyl-CoA. In Aethionema grandiflorum (Persian stone-cress), this protein is Acetyl-coenzyme A carboxylase carboxyl transferase subunit beta, chloroplastic.